We begin with the raw amino-acid sequence, 912 residues long: Type II beta methyltransferase M.BslI (912 aa).

It belongs to the N(4)/N(6)-methyltransferase family. N(4) subfamily.

It catalyses the reaction a 2'-deoxycytidine in DNA + S-adenosyl-L-methionine = an N(4)-methyl-2'-deoxycytidine in DNA + S-adenosyl-L-homocysteine + H(+). A beta subtype methylase. Recognizes the double-stranded sequence 5'-CCN(7)GG-3', methylates C-2 on both strands, and protects the DNA from cleavage by the BslI endonuclease. The sequence is that of Type II beta methyltransferase M.BslI (bslIM) from Bacillus sp. (strain NEB-606).